Here is a 163-residue protein sequence, read N- to C-terminus: Cytochrome c-type biogenesis protein CcmE (163 aa).

The Cytoplasmic portion of the chain corresponds to 1 to 8; sequence MNPRRKKR. A helical; Signal-anchor for type II membrane protein transmembrane segment spans residues 9-29; the sequence is LTIILAISAGLAAVIGLVLYA. Topologically, residues 30–163 are periplasmic; the sequence is LSQNIDLFYT…TEAQLKGSKQ (134 aa). 2 residues coordinate heme: histidine 131 and tyrosine 135.

It belongs to the CcmE/CycJ family.

The protein resides in the cell inner membrane. Its function is as follows. Heme chaperone required for the biogenesis of c-type cytochromes. Transiently binds heme delivered by CcmC and transfers the heme to apo-cytochromes in a process facilitated by CcmF and CcmH. This is Cytochrome c-type biogenesis protein CcmE from Aeromonas hydrophila subsp. hydrophila (strain ATCC 7966 / DSM 30187 / BCRC 13018 / CCUG 14551 / JCM 1027 / KCTC 2358 / NCIMB 9240 / NCTC 8049).